The chain runs to 396 residues: S-adenosylmethionine synthase (396 aa).

Glu-11 provides a ligand contact to Mg(2+). His-17 contributes to the ATP binding site. Glu-45 is a binding site for K(+). L-methionine is bound by residues Glu-58 and Gln-101. Residues 169 to 171, 237 to 240, Asp-248, 254 to 255, Ala-271, Lys-275, and Lys-279 each bind ATP; these read DGK, SGRF, and RK. L-methionine is bound at residue Asp-248. Residue Lys-279 participates in L-methionine binding.

The protein belongs to the AdoMet synthase family. As to quaternary structure, homotetramer. Requires Mn(2+) as cofactor. Mg(2+) is required as a cofactor. Co(2+) serves as cofactor. It depends on K(+) as a cofactor.

It localises to the cytoplasm. The enzyme catalyses L-methionine + ATP + H2O = S-adenosyl-L-methionine + phosphate + diphosphate. It functions in the pathway amino-acid biosynthesis; S-adenosyl-L-methionine biosynthesis; S-adenosyl-L-methionine from L-methionine: step 1/1. Its function is as follows. Catalyzes the formation of S-adenosylmethionine from methionine and ATP. The reaction comprises two steps that are both catalyzed by the same enzyme: formation of S-adenosylmethionine (AdoMet) and triphosphate, and subsequent hydrolysis of the triphosphate. In Medicago sativa subsp. falcata (Sickle medic), this protein is S-adenosylmethionine synthase (SAMS).